The chain runs to 146 residues: Hemoglobin subunit beta (146 aa).

Residue valine 1 is modified to N-acetylvaline. Residues 2 to 146 enclose the Globin domain; that stretch reads HLTAEEKSAV…VATALAHKYH (145 aa). Position 12 is a phosphothreonine (threonine 12). Serine 44 carries the post-translational modification Phosphoserine. Lysine 59 bears the N6-acetyllysine mark. Position 63 (histidine 63) interacts with heme b. N6-acetyllysine is present on lysine 82. Histidine 92 is a binding site for heme b. Cysteine 93 bears the S-nitrosocysteine mark. N6-acetyllysine is present on lysine 144.

Belongs to the globin family. Heterotetramer of two alpha chains and two beta chains. As to expression, red blood cells.

Functionally, involved in oxygen transport from the lung to the various peripheral tissues. This chain is Hemoglobin subunit beta (HBB), found in Cebus albifrons (White-fronted capuchin).